The primary structure comprises 532 residues: MLDASISPVVLVILDGWGYRNATEGNAIRTAETPIMDALWEAYPSTLIHTSGKDVGLPDGQMGNSEVGHLNLGAGRIVPQELVRITDAVEDGSILENPALLQACSAVRQHGSKLHLIGLCSDGGVHAHLDHLGGLLKLAAAQGIQDVYIHAITDGRDTNPTEGVNCITKIERLIATAGVGQIVTICGRYFAMDRDRRWDRVRKAYELLTIDGEGCGQTATEVLQETYAKGVSDEFVEPTRLAPGAIAPGDGVIFFNFRPDRARQLTYAFVEAEFEGFERDLIQPLTFVTFTQYDANLNVPVAFEPQNLTNILGEVVANHGLRQFRTAETEKYPHVTYFFNGGIEEPFPGEDRELIPSPMVATYDRAPKMSAQAVTDAAIAAIDKGIYSLVVINYANPDMVGHTGKMGATVEAIETVDRCLGRLVSAINRAGGTALITADHGNAEYMWDENGEPWTAHTTNLVPFIVVEGERRKLPGFGTEIPLREDGRLSDIAPTILQLLGLPQPVEMTGRSMIEPAAYEVKQGRTPVKVGV.

Asp15 and Ser65 together coordinate Mn(2+). The Phosphoserine intermediate role is filled by Ser65. Residues His126, 156–157 (RD), Arg188, Arg194, 258–261 (RPDR), and Lys331 each bind substrate. Residues Asp398, His402, Asp439, His440, and His457 each coordinate Mn(2+).

The protein belongs to the BPG-independent phosphoglycerate mutase family. As to quaternary structure, monomer. Requires Mn(2+) as cofactor.

The enzyme catalyses (2R)-2-phosphoglycerate = (2R)-3-phosphoglycerate. The protein operates within carbohydrate degradation; glycolysis; pyruvate from D-glyceraldehyde 3-phosphate: step 3/5. Catalyzes the interconversion of 2-phosphoglycerate and 3-phosphoglycerate. The polypeptide is 2,3-bisphosphoglycerate-independent phosphoglycerate mutase (Synechococcus elongatus (strain ATCC 33912 / PCC 7942 / FACHB-805) (Anacystis nidulans R2)).